The sequence spans 196 residues: Imidazoleglycerol-phosphate dehydratase (196 aa).

Belongs to the imidazoleglycerol-phosphate dehydratase family.

Its subcellular location is the cytoplasm. The catalysed reaction is D-erythro-1-(imidazol-4-yl)glycerol 3-phosphate = 3-(imidazol-4-yl)-2-oxopropyl phosphate + H2O. It participates in amino-acid biosynthesis; L-histidine biosynthesis; L-histidine from 5-phospho-alpha-D-ribose 1-diphosphate: step 6/9. The chain is Imidazoleglycerol-phosphate dehydratase from Ralstonia nicotianae (strain ATCC BAA-1114 / GMI1000) (Ralstonia solanacearum).